A 483-amino-acid chain; its full sequence is Docking protein 1 (483 aa).

Met1 is modified (N-acetylmethionine). The PH domain maps to 4–119 (AVMEGPLFLQ…WVQTLCQNAF (116 aa)). Residue Ser48 is modified to Phosphoserine. In terms of domain architecture, IRS-type PTB spans 151 to 259 (EGSQFWVTVQ…HRQKIQGKAG (109 aa)). Ser269 and Ser291 each carry phosphoserine. The disordered stretch occupies residues 293 to 326 (PALYSEPLDSLRIPPGPSQDSLYSDPLDSTPARA). Phosphotyrosine occurs at positions 296, 337, 362, 377, 398, and 409. The tract at residues 409-483 (YAVPPPRSTK…RTGAKSEGST (75 aa)) is disordered. The segment covering 411–424 (VPPPRSTKPFPAPK) has biased composition (pro residues). Ser416 is modified (phosphoserine). The span at 434 to 460 (GAATGSGSQGHSSDTALYSQVQKSGAS) shows a compositional bias: polar residues. Residue Tyr451 is modified to Phosphotyrosine. Ser462 bears the Phosphoserine mark.

It belongs to the DOK family. Type A subfamily. In terms of assembly, interacts with RasGAP, INPP5D/SHIP1 and ABL1. Interacts directly with phosphorylated ITGB3. Interacts with SRMS (via the SH2 and SH3 domains). Post-translationally, constitutively tyrosine-phosphorylated. Phosphorylated by TEC. Phosphorylated by LYN. Phosphorylated on tyrosine residues by the insulin receptor kinase. Results in the negative regulation of the insulin signaling pathway. Phosphorylated on tyrosine residues by SRMS.

It localises to the cytoplasm. The protein localises to the nucleus. DOK proteins are enzymatically inert adaptor or scaffolding proteins. They provide a docking platform for the assembly of multimolecular signaling complexes. DOK1 appears to be a negative regulator of the insulin signaling pathway. Modulates integrin activation by competing with talin for the same binding site on ITGB3. This chain is Docking protein 1 (DOK1), found in Bos taurus (Bovine).